The primary structure comprises 365 residues: tRNA/tmRNA (uracil-C(5))-methyltransferase (365 aa).

Positions 189, 217, 222, 238, and 298 each coordinate S-adenosyl-L-methionine. Cysteine 323 functions as the Nucleophile in the catalytic mechanism. Glutamate 357 acts as the Proton acceptor in catalysis.

It belongs to the class I-like SAM-binding methyltransferase superfamily. RNA M5U methyltransferase family. TrmA subfamily.

It carries out the reaction uridine(54) in tRNA + S-adenosyl-L-methionine = 5-methyluridine(54) in tRNA + S-adenosyl-L-homocysteine + H(+). The enzyme catalyses uridine(341) in tmRNA + S-adenosyl-L-methionine = 5-methyluridine(341) in tmRNA + S-adenosyl-L-homocysteine + H(+). Functionally, dual-specificity methyltransferase that catalyzes the formation of 5-methyluridine at position 54 (m5U54) in all tRNAs, and that of position 341 (m5U341) in tmRNA (transfer-mRNA). This Shewanella denitrificans (strain OS217 / ATCC BAA-1090 / DSM 15013) protein is tRNA/tmRNA (uracil-C(5))-methyltransferase.